Consider the following 234-residue polypeptide: Small ribosomal subunit protein uS3 (234 aa).

The KH type-2 domain maps to 39–107; the sequence is IRKFLKKELY…EVSINIKEVK (69 aa).

It belongs to the universal ribosomal protein uS3 family. As to quaternary structure, part of the 30S ribosomal subunit. Forms a tight complex with proteins S10 and S14.

Functionally, binds the lower part of the 30S subunit head. Binds mRNA in the 70S ribosome, positioning it for translation. The polypeptide is Small ribosomal subunit protein uS3 (Helicobacter pylori (strain P12)).